We begin with the raw amino-acid sequence, 23 residues long: Thymidine phosphorylase (23 aa).

This sequence belongs to the thymidine/pyrimidine-nucleoside phosphorylase family. In terms of assembly, homodimer.

The catalysed reaction is thymidine + phosphate = 2-deoxy-alpha-D-ribose 1-phosphate + thymine. The enzymes which catalyze the reversible phosphorolysis of pyrimidine nucleosides are involved in the degradation of these compounds and in their utilization as carbon and energy sources, or in the rescue of pyrimidine bases for nucleotide synthesis. The chain is Thymidine phosphorylase (deoA) from Lacticaseibacillus rhamnosus (Lactobacillus rhamnosus).